Here is a 59-residue protein sequence, read N- to C-terminus: Large ribosomal subunit protein bL32 (59 aa).

Disordered stretches follow at residues 1–23 (MAVQ…DFLT) and 35–59 (EVHL…TKND). The span at 49–59 (RGKKVVKTKND) shows a compositional bias: basic residues.

This sequence belongs to the bacterial ribosomal protein bL32 family.

In Burkholderia ambifaria (strain MC40-6), this protein is Large ribosomal subunit protein bL32.